The sequence spans 463 residues: Annexin A7 (463 aa).

Pro residues-rich tracts occupy residues M1 to P18 and F26 to F38. Disordered stretches follow at residues M1–Y54 and G71–T153. Residues M1–P140 are repeat-rich region. The interval G5–T20 is 3 X 5 AA tandem repeats of G-Y-P-P-X. The segment covering G86–F99 has biased composition (gly residues). Annexin repeat units follow at residues F160–M231, P232–Q303, Q315–Q387, and N391–G462. Residue K208 is modified to N6-acetyllysine.

It belongs to the annexin family. As to quaternary structure, interacts with PDCD6.

Calcium/phospholipid-binding protein which promotes membrane fusion and is involved in exocytosis. This Bos taurus (Bovine) protein is Annexin A7 (ANXA7).